The primary structure comprises 257 residues: NAD-capped RNA hydrolase NudC (257 aa).

R69 contributes to the substrate binding site. Residues C98 and C101 each contribute to the Zn(2+) site. E111 contacts substrate. C116 and C119 together coordinate Zn(2+). Position 124 (Y124) interacts with substrate. A Nudix hydrolase domain is found at 125–248 (PQIAPCIIVA…TVARRLIEDT (124 aa)). 3 residues coordinate a divalent metal cation: A158, E174, and E178. The Nudix box motif lies at 159–180 (GFVEVGETLEQAVAREVMEESG). 192 to 199 (QPWPFPQS) provides a ligand contact to substrate. E219 is a binding site for a divalent metal cation. A substrate-binding site is contributed by A241.

The protein belongs to the Nudix hydrolase family. NudC subfamily. In terms of assembly, homodimer. Mg(2+) is required as a cofactor. It depends on Mn(2+) as a cofactor. Zn(2+) serves as cofactor.

The enzyme catalyses a 5'-end NAD(+)-phospho-ribonucleoside in mRNA + H2O = a 5'-end phospho-adenosine-phospho-ribonucleoside in mRNA + beta-nicotinamide D-ribonucleotide + 2 H(+). It catalyses the reaction NAD(+) + H2O = beta-nicotinamide D-ribonucleotide + AMP + 2 H(+). It carries out the reaction NADH + H2O = reduced beta-nicotinamide D-ribonucleotide + AMP + 2 H(+). Functionally, mRNA decapping enzyme that specifically removes the nicotinamide adenine dinucleotide (NAD) cap from a subset of mRNAs by hydrolyzing the diphosphate linkage to produce nicotinamide mononucleotide (NMN) and 5' monophosphate mRNA. The NAD-cap is present at the 5'-end of some mRNAs and stabilizes RNA against 5'-processing. Has preference for mRNAs with a 5'-end purine. Catalyzes the hydrolysis of a broad range of dinucleotide pyrophosphates. This is NAD-capped RNA hydrolase NudC from Salmonella dublin (strain CT_02021853).